Here is a 391-residue protein sequence, read N- to C-terminus: Casein kinase II subunit alpha (391 aa).

Residues 36–41 (QDDYQL) are interaction with beta subunit. One can recognise a Protein kinase domain in the interval 39-324 (YQLVRKLGRG…AREAMEHPYF (286 aa)). ATP-binding positions include 45-53 (LGRGKYSEV) and Lys-68. The active-site Proton acceptor is Asp-156. Phosphothreonine; by CDK1 occurs at positions 344 and 360. Residues Ser-362 and Ser-370 each carry the phosphoserine; by CDK1 modification.

This sequence belongs to the protein kinase superfamily. Ser/Thr protein kinase family. CK2 subfamily. As to quaternary structure, heterotetramer composed of two catalytic subunits (alpha chain and/or alpha' chain) and two regulatory subunits (beta chains). The tetramer can exist as a combination of 2 alpha/2 beta, 2 alpha'/2 beta or 1 alpha/1 alpha'/2 beta subunits. Also part of a CK2-SPT16-SSRP1 complex composed of SSRP1, SUPT16H, CSNK2A1, CSNK2A2 and CSNK2B, which forms following UV irradiation. Interacts with RNPS1. Interacts with SNAI1. Interacts with PML. Interacts with CCAR2. Interacts with HIRIP3. In terms of processing, phosphorylated at Thr-344, Thr-360, Ser-362 and Ser-370 by CDK1 in prophase and metaphase and dephosphorylated during anaphase. Phosphorylation does not directly affect casein kinase 2 activity, but may contribute to its regulation by forming binding sites for interacting proteins and/or targeting it to different compartments.

It localises to the nucleus. The enzyme catalyses L-seryl-[protein] + ATP = O-phospho-L-seryl-[protein] + ADP + H(+). It catalyses the reaction L-threonyl-[protein] + ATP = O-phospho-L-threonyl-[protein] + ADP + H(+). Its activity is regulated as follows. Constitutively active protein kinase whose activity is not directly affected by phosphorylation. Seems to be regulated by level of expression and localization. In terms of biological role, catalytic subunit of a constitutively active serine/threonine-protein kinase complex that phosphorylates a large number of substrates containing acidic residues C-terminal to the phosphorylated serine or threonine. Regulates numerous cellular processes, such as cell cycle progression, apoptosis and transcription, as well as viral infection. May act as a regulatory node which integrates and coordinates numerous signals leading to an appropriate cellular response. During mitosis, functions as a component of the p53/TP53-dependent spindle assembly checkpoint (SAC) that maintains cyclin-B-CDK1 activity and G2 arrest in response to spindle damage. Also required for p53/TP53-mediated apoptosis, phosphorylating 'Ser-392' of p53/TP53 following UV irradiation. Phosphorylates a number of DNA repair proteins in response to DNA damage, such as MDC1, MRE11, RAD9A, RAD51 and HTATSF1, promoting their recruitment to DNA damage sites. Can also negatively regulate apoptosis. Phosphorylates the caspases CASP9 and CASP2 and the apoptotic regulator NOL3. Phosphorylation protects CASP9 from cleavage and activation by CASP8, and inhibits the dimerization of CASP2 and activation of CASP8. Phosphorylates YY1, protecting YY1 from cleavage by CASP7 during apoptosis. Regulates transcription by direct phosphorylation of RNA polymerases I, II, III and IV. Also phosphorylates and regulates numerous transcription factors including NF-kappa-B, STAT1, CREB1, IRF1, IRF2, ATF1, ATF4, SRF, MAX, JUN, FOS, MYC and MYB. Phosphorylates Hsp90 and its co-chaperones FKBP4 and CDC37, which is essential for chaperone function. Mediates sequential phosphorylation of FNIP1, promoting its gradual interaction with Hsp90, leading to activate both kinase and non-kinase client proteins of Hsp90. Regulates Wnt signaling by phosphorylating CTNNB1 and the transcription factor LEF1. Acts as an ectokinase that phosphorylates several extracellular proteins. Phosphorylates PML at 'Ser-565' and primes it for ubiquitin-mediated degradation. Plays an important role in the circadian clock function by phosphorylating BMAL1 at 'Ser-90' which is pivotal for its interaction with CLOCK and which controls CLOCK nuclear entry. Phosphorylates FMR1, promoting FMR1-dependent formation of a membraneless compartment. May phosphorylate histone H2A on 'Ser-1'. This is Casein kinase II subunit alpha (CSNK2A1) from Oryctolagus cuniculus (Rabbit).